Consider the following 189-residue polypeptide: Peptidyl-tRNA hydrolase (189 aa).

Tyrosine 14 is a binding site for tRNA. The active-site Proton acceptor is the histidine 19. Residues phenylalanine 64, asparagine 66, and asparagine 112 each coordinate tRNA.

It belongs to the PTH family. As to quaternary structure, monomer.

It is found in the cytoplasm. It catalyses the reaction an N-acyl-L-alpha-aminoacyl-tRNA + H2O = an N-acyl-L-amino acid + a tRNA + H(+). Hydrolyzes ribosome-free peptidyl-tRNAs (with 1 or more amino acids incorporated), which drop off the ribosome during protein synthesis, or as a result of ribosome stalling. In terms of biological role, catalyzes the release of premature peptidyl moieties from peptidyl-tRNA molecules trapped in stalled 50S ribosomal subunits, and thus maintains levels of free tRNAs and 50S ribosomes. This Zymomonas mobilis subsp. mobilis (strain ATCC 31821 / ZM4 / CP4) protein is Peptidyl-tRNA hydrolase.